Consider the following 66-residue polypeptide: MNVTVEVVGEETSEVAVDDDGTYADLVRAVDLSPHEVTVLVDGRPVPEDQSVEVDRVKVLRLIKGG.

Residue lysine 58 forms a Glycyl lysine isopeptide (Lys-Gly) (interchain with G-Cter in SAMP2) linkage. Position 66 is a 1-thioglycine; alternate (glycine 66). Glycyl adenylate; alternate is present on glycine 66. A Glycyl lysine isopeptide (Gly-Lys) (interchain with K-? in acceptor proteins); alternate cross-link involves residue glycine 66.

Monomer. Monomeric and polymeric forms interact with NcsA. In terms of processing, the C-terminal glycine is likely acyl-adenylated (-COAMP) by UbaA, and also probably thiocarboxylated (-COSH) to function in sulfur transfer.

In terms of biological role, functions as a protein modifier covalently attached to lysine residues of substrate proteins, as well as a sulfur carrier in tRNA thiolation. The protein modification process is termed sampylation and involves the formation of an isopeptide bond between the SAMP2 C-terminal glycine carboxylate and the epsilon-amino group of lysine residues on target proteins. Is able to form polymeric chains with itself at Lys-58, similar to ubiquitin and other ubiquitin-like proteins. May serve as a proteolytic signal in the cell to target proteins for degradation by proteasomes. In Haloferax volcanii (strain ATCC 29605 / DSM 3757 / JCM 8879 / NBRC 14742 / NCIMB 2012 / VKM B-1768 / DS2) (Halobacterium volcanii), this protein is Small archaeal modifier protein 2 (samp2).